The primary structure comprises 619 residues: Dihydroxy-acid dehydratase (619 aa).

D81 is a binding site for Mg(2+). [2Fe-2S] cluster is bound at residue C122. The Mg(2+) site is built by D123 and K124. K124 bears the N6-carboxylysine mark. C198 contributes to the [2Fe-2S] cluster binding site. E494 is a Mg(2+) binding site. The active-site Proton acceptor is the S520.

It belongs to the IlvD/Edd family. Homodimer. [2Fe-2S] cluster is required as a cofactor. Mg(2+) serves as cofactor.

It carries out the reaction (2R)-2,3-dihydroxy-3-methylbutanoate = 3-methyl-2-oxobutanoate + H2O. It catalyses the reaction (2R,3R)-2,3-dihydroxy-3-methylpentanoate = (S)-3-methyl-2-oxopentanoate + H2O. It functions in the pathway amino-acid biosynthesis; L-isoleucine biosynthesis; L-isoleucine from 2-oxobutanoate: step 3/4. It participates in amino-acid biosynthesis; L-valine biosynthesis; L-valine from pyruvate: step 3/4. Its function is as follows. Functions in the biosynthesis of branched-chain amino acids. Catalyzes the dehydration of (2R,3R)-2,3-dihydroxy-3-methylpentanoate (2,3-dihydroxy-3-methylvalerate) into 2-oxo-3-methylpentanoate (2-oxo-3-methylvalerate) and of (2R)-2,3-dihydroxy-3-methylbutanoate (2,3-dihydroxyisovalerate) into 2-oxo-3-methylbutanoate (2-oxoisovalerate), the penultimate precursor to L-isoleucine and L-valine, respectively. The chain is Dihydroxy-acid dehydratase from Neisseria meningitidis serogroup A / serotype 4A (strain DSM 15465 / Z2491).